Reading from the N-terminus, the 564-residue chain is Dicarboxylate transporter 2, chloroplastic (564 aa).

A chloroplast-targeting transit peptide spans 1 to 22 (MESLALLPTLSLSTTTTTSKAT). A disordered region spans residues 35 to 58 (RRPHLSLSLSSTPKPTLTFSSHSH). The segment covering 39 to 58 (LSLSLSSTPKPTLTFSSHSH) has biased composition (low complexity). 12 consecutive transmembrane segments (helical) span residues 94-114 (GAKLIPLILSVSVGLLLRFAV), 127-147 (LLAIFLSTVAGLVLSPLPVGA), 166-186 (TAFCAFTNEVIWLIVISFFFA), 235-255 (AGGIFLPIIKSLSISSGSLPG), 262-282 (LGTYLIMTQFQSAGNSSALFL), 307-327 (VFWLKAASLPAFVALLLTPLI), 356-376 (VTKNEWVMVGTMLLAVSLWVF), 380-400 (IGVSSVVAAMLGLSVLLLLGV), 415-435 (TLAWFAVLVGMASQLTNLGIV), 451-471 (LSWPAAFGILQAAYFFVHYLF), 484-504 (AFLAMNIASGVPGVLAALALA), and 538-558 (MGFIMAVINATIWTVVGGVWW).

This sequence belongs to the SLC13A/DASS transporter (TC 2.A.47) family. DIT1 subfamily. In terms of tissue distribution, expressed in leaves.

Its subcellular location is the plastid. The protein resides in the chloroplast inner membrane. Glutamate/malate translocator involved with DIT1 in primary ammonia assimilation and in the re-assimilation of ammonia generated by the photorespiratory pathway. Exports the end product of ammonia assimilation, glutamate, from plastids to the cytosol. The precursor for ammonia assimilation, 2-oxoglutarate, is imported from the cytosol by DIT1. The protein is Dicarboxylate transporter 2, chloroplastic (DIT2) of Spinacia oleracea (Spinach).